The sequence spans 570 residues: Periplasmic trehalase (570 aa).

A signal peptide spans 1 to 34 (MIPPEIRRSVLLQKAIKLALAGTLLTFASFSATA). Substrate is bound by residues arginine 159, 166 to 167 (WD), asparagine 203, 212 to 214 (RSQ), 284 to 286 (RPE), and glycine 317. Catalysis depends on proton donor/acceptor residues aspartate 319 and glutamate 503. Glutamate 518 provides a ligand contact to substrate. Residues 544 to 570 (KPCDSVPSTRPASLSATPTKTPSAATQ) are disordered. Positions 554–570 (PASLSATPTKTPSAATQ) are enriched in low complexity.

The protein belongs to the glycosyl hydrolase 37 family. Monomer.

The protein resides in the periplasm. The enzyme catalyses alpha,alpha-trehalose + H2O = alpha-D-glucose + beta-D-glucose. Its function is as follows. Provides the cells with the ability to utilize trehalose at high osmolarity by splitting it into glucose molecules that can subsequently be taken up by the phosphotransferase-mediated uptake system. The polypeptide is Periplasmic trehalase (Salmonella schwarzengrund (strain CVM19633)).